The primary structure comprises 200 residues: Pyridoxal phosphate homeostasis protein (200 aa).

Lys11 carries the N6-(pyridoxal phosphate)lysine modification.

This sequence belongs to the pyridoxal phosphate-binding protein YggS/PROSC family. In terms of assembly, monomer.

Functionally, pyridoxal 5'-phosphate (PLP)-binding protein, which is involved in PLP homeostasis. The protein is Pyridoxal phosphate homeostasis protein of Buchnera aphidicola subsp. Acyrthosiphon pisum (strain APS) (Acyrthosiphon pisum symbiotic bacterium).